Here is a 366-residue protein sequence, read N- to C-terminus: tRNA/tmRNA (uracil-C(5))-methyltransferase (366 aa).

Residues Gln190, Tyr218, Asn223, Glu239, and Asp299 each coordinate S-adenosyl-L-methionine. Cys324 functions as the Nucleophile in the catalytic mechanism. The Proton acceptor role is filled by Glu358.

It belongs to the class I-like SAM-binding methyltransferase superfamily. RNA M5U methyltransferase family. TrmA subfamily.

The enzyme catalyses uridine(54) in tRNA + S-adenosyl-L-methionine = 5-methyluridine(54) in tRNA + S-adenosyl-L-homocysteine + H(+). It catalyses the reaction uridine(341) in tmRNA + S-adenosyl-L-methionine = 5-methyluridine(341) in tmRNA + S-adenosyl-L-homocysteine + H(+). Functionally, dual-specificity methyltransferase that catalyzes the formation of 5-methyluridine at position 54 (m5U54) in all tRNAs, and that of position 341 (m5U341) in tmRNA (transfer-mRNA). The protein is tRNA/tmRNA (uracil-C(5))-methyltransferase of Salmonella heidelberg (strain SL476).